Here is a 113-residue protein sequence, read N- to C-terminus: UPF0122 protein M6_Spy0905 (113 aa).

It belongs to the UPF0122 family.

Might take part in the signal recognition particle (SRP) pathway. This is inferred from the conservation of its genetic proximity to ftsY/ffh. May be a regulatory protein. The chain is UPF0122 protein M6_Spy0905 from Streptococcus pyogenes serotype M6 (strain ATCC BAA-946 / MGAS10394).